The following is a 279-amino-acid chain: Coiled-coil domain-containing protein 117 (279 aa).

The disordered stretch occupies residues 1–82 (MAALGRPFSG…REEEEDDDCP (82 aa)). Residue Arg48 is modified to Omega-N-methylarginine. Residue Ser53 is modified to Phosphoserine. The segment covering 63–72 (VSVHCKKKHK) has biased composition (basic residues). Positions 141–168 (QCEVARRKLQEIEDRIIDEDEEVEADRN) form a coiled coil. A disordered region spans residues 217 to 279 (LLSDKPKPSS…ATSTEEEMEL (63 aa)). Polar residues-rich tracts occupy residues 224–235 (PSSNTKNYTGES) and 262–272 (SLYNSLETATS).

Interacts with CIAO2B; the interaction is direct. Interacts with MMS19; the interaction is indirect.

The protein resides in the cytoplasm. It localises to the cytoskeleton. It is found in the spindle. Its subcellular location is the nucleus. In terms of biological role, facilitates DNA repair, cell cycle progression, and cell proliferation through its interaction with CIAO2B. The protein is Coiled-coil domain-containing protein 117 of Homo sapiens (Human).